The sequence spans 164 residues: V-type proton ATPase 16 kDa proteolipid subunit (164 aa).

The Lumenal segment spans residues 1 to 9 (MSNFAGDET). The helical transmembrane segment at 10-32 (APFFGFLGAAAALVFSCMGAAYG) threads the bilayer. Residues 33–54 (TAKSGVGVASMGVMRPELVMKS) lie on the Cytoplasmic side of the membrane. A helical membrane pass occupies residues 55–75 (IVPVVMAGVLGIYGLIIAVII). The Lumenal segment spans residues 76 to 94 (STGINPKTKSYYLFDGYAH). Residues 95–116 (LSSGLACGLAGLSAGMAIGIVG) form a helical membrane-spanning segment. Over 117-128 (DAGVRANAQQPK) the chain is Cytoplasmic. Residues 129–154 (LFVGMILILIFAEALALYGLIVGIIL) traverse the membrane as a helical segment. Residues 155 to 164 (SSRAGQSRAE) lie on the Lumenal side of the membrane.

The protein belongs to the V-ATPase proteolipid subunit family. As to quaternary structure, V-ATPase is a heteromultimeric enzyme composed of a peripheral catalytic V1 complex (main components: subunits A, B, C, D, E, and F) attached to an integral membrane V0 proton pore complex (main component: the proteolipid protein; which is present as a hexamer that forms the proton-conducting pore).

It is found in the vacuole membrane. Functionally, proton-conducting pore forming subunit of the membrane integral V0 complex of vacuolar ATPase. V-ATPase is responsible for acidifying a variety of intracellular compartments in eukaryotic cells. The chain is V-type proton ATPase 16 kDa proteolipid subunit from Solanum lycopersicum (Tomato).